The primary structure comprises 84 residues: ATP synthase subunit c (84 aa).

2 consecutive transmembrane segments (helical) span residues 9–29 (IIGA…GFAI) and 54–74 (IVAG…LLFI).

Belongs to the ATPase C chain family. F-type ATPases have 2 components, F(1) - the catalytic core - and F(0) - the membrane proton channel. F(1) has five subunits: alpha(3), beta(3), gamma(1), delta(1), epsilon(1). F(0) has three main subunits: a(1), b(2) and c(10-14). The alpha and beta chains form an alternating ring which encloses part of the gamma chain. F(1) is attached to F(0) by a central stalk formed by the gamma and epsilon chains, while a peripheral stalk is formed by the delta and b chains.

The protein localises to the cell inner membrane. F(1)F(0) ATP synthase produces ATP from ADP in the presence of a proton or sodium gradient. F-type ATPases consist of two structural domains, F(1) containing the extramembraneous catalytic core and F(0) containing the membrane proton channel, linked together by a central stalk and a peripheral stalk. During catalysis, ATP synthesis in the catalytic domain of F(1) is coupled via a rotary mechanism of the central stalk subunits to proton translocation. Functionally, key component of the F(0) channel; it plays a direct role in translocation across the membrane. A homomeric c-ring of between 10-14 subunits forms the central stalk rotor element with the F(1) delta and epsilon subunits. This Haemophilus influenzae (strain PittEE) protein is ATP synthase subunit c.